The primary structure comprises 224 residues: MVYESGNKPGPENPTFSSDLSLSDSLVKLKKKPCEVCGSDANELLMMTCFMCRDTREHTYCARVMFQRVPRLWICEECRDFSSVANKTANAQSSRTIQVEQVVVKQVRIDQTVPSPRTNQVVDNHQDPPIDQTDPSSTTIQVVDNENLIEAAPSSRSNQVVDNKDWIEAAPSLRSNQVVPVAPRIHEFTTDESSSPVSPCSLDDETNLFHFKYPSLSLPPLMKN.

Residues 31 to 81 (KKPCEVCGSDANELLMMTCFMCRDTREHTYCARVMFQRVPRLWICEECRDF) form a PHD-type zinc finger. Zn(2+) contacts are provided by Cys-34, Cys-37, Cys-49, Cys-52, His-58, Cys-61, Cys-75, and Cys-78. A disordered region spans residues 116 to 137 (PRTNQVVDNHQDPPIDQTDPSS).

As to quaternary structure, interacts directly with AIPP3/BDT1.

Functionally, together with AIPP3/BDT1, cooperates to form a BAH-PHD bivalent histone reader complex able to read histone H3 lysine 27 trimethylation (H3K27me3) histone marks in order to regulate transcription, especially to prevent early flowering; promotes AIPP3/BDT1 binding to H3K27me3. In Arabidopsis thaliana (Mouse-ear cress), this protein is PHD finger-containing protein 5.